A 526-amino-acid polypeptide reads, in one-letter code: Acid-sensing ion channel 1 (526 aa).

The Cytoplasmic portion of the chain corresponds to 1 to 49 (MELKTEEEEVGGVQPVSIQAFASSSTLHGLAHIFSYERLSLKRALWALC). The helical transmembrane segment at 50–66 (FLGSLAVLLCVCTERVQ) threads the bilayer. Residues 67 to 425 (YYFCYHHVTK…ETIEQKKAYE (359 aa)) are Extracellular-facing. Cystine bridges form between C93–C194, C172–C179, C290–C365, C308–C361, C312–C359, C321–C343, and C323–C335. Residues N366 and N393 are each glycosylated (N-linked (GlcNAc...) asparagine). A discontinuously helical membrane pass occupies residues 426–456 (IAGLLGDIGGQMGLFIGASILTVLELFDYAY). Positions 442 to 444 (GAS) match the GAS motif; ion selectivity filter motif. Residues 457–526 (EVIKHRLCRR…ARGTFEDFTC (70 aa)) lie on the Cytoplasmic side of the membrane. The residue at position 477 (S477) is a Phosphoserine; by PKA. Residue S497 is modified to Phosphoserine.

This sequence belongs to the amiloride-sensitive sodium channel (TC 1.A.6) family. ASIC1 subfamily. In terms of assembly, homotrimer. Heterotrimer; with other ASIC proteins producing channel with different properties. Interacts with PICK1; regulates ASIC1 clustering in membranes. Interacts with STOM; alters heterotrimeric ASIC channels activity. In terms of processing, pH-gating could be regulated by serine proteases. Phosphorylation by PKA regulates interaction with PICK1 and subcellular localization. Phosphorylation by PKC may regulate the channel. As to expression, expressed in brain areas receiving strong excitatory corticofugal input. In hippocampus, expressed in the hilus of the dentate gyrus. In the cerebral cortex expressed in anterior and posterior cingulate cortex, sensory and motor cortices. In the sensory cortex strongest expression is detected in the whisker barrel field. In sensorimotor and cingulate cortex expression is elevated in layer III. Also expressed in basal ganglia, striatum, ventral pallidum, olfactory tubercle, and nucleus accumbens. Weakly expressed in thalamus with the exception of the habenula and the medial septal nuclei. In olfactory bulb, preferentially expressed in the glomerular layer, within glomeruli. Expressed in cerebellum in the molecular and granule cell layers. Strongly expressed in amygdala complex, particularly in the lateral and basolateral nuclei. Isoform 1 is more abundant in brain compared to isoform 2 (at protein level). Expressed in the nodose ganglion and dorsal root ganglion. Expressed in dendritic spine cells.

The protein resides in the cell membrane. It is found in the postsynaptic cell membrane. It localises to the cell projection. Its subcellular location is the dendrite. The enzyme catalyses Na(+)(in) = Na(+)(out). The catalysed reaction is Ca(2+)(in) = Ca(2+)(out). It catalyses the reaction K(+)(in) = K(+)(out). It carries out the reaction Li(+)(in) = Li(+)(out). Inhibited by the diuretic drug amiloride. Its activity is regulated as follows. The activity of the channel is sensitive to rapid decrease in osmotic pressure. Forms voltage-independent, pH-gated trimeric sodium channels that act as postsynaptic excitatory receptors in the nervous system, playing a crucial role in regulating synaptic plasticity, learning, and memory. Upon extracellular pH drop this channel elicits transient, fast activating, and completely desensitizing inward currents. Displays high selectivity for sodium ions but can also permit the permeation of other cations. Regulates more or less directly intracellular calcium concentration and CaMKII phosphorylation, and thereby the density of dendritic spines. Modulates neuronal activity in the circuits underlying innate fear. In terms of biological role, has high selectivity for sodium ions but is also potentially permeable to other cations including potassium. Could function in cochlear mechanoelectrical transduction. The sequence is that of Acid-sensing ion channel 1 from Mus musculus (Mouse).